The sequence spans 682 residues: Potassium-transporting ATPase ATP-binding subunit (682 aa).

5 consecutive transmembrane segments (helical) span residues 15–35 (AALFDAAVLVAAMRAAFAKLA), 42–62 (SPVMAVVMGGTVLAAVITASG), 66–86 (AGFGWAVTAILFVTVLFGNFA), 233–253 (LTFLIVVASLPAIAGFVGVTL), and 257–277 (LLIALLVCLIPTTIGGLLPAI). The active-site 4-aspartylphosphate intermediate is aspartate 310. Residues aspartate 347, glutamate 351, 377–384 (FTAQTRMS), and lysine 395 contribute to the ATP site. Aspartate 518 and aspartate 522 together coordinate Mg(2+). 3 consecutive transmembrane segments (helical) span residues 588-608 (FAILPALFAAAIPSMAALNVM), 616-636 (AVLAALIFNALIIPALIPLAL), and 662-682 (VLLPFAAIKAIDLALVAVLGA).

Belongs to the cation transport ATPase (P-type) (TC 3.A.3) family. Type IA subfamily. In terms of assembly, the system is composed of three essential subunits: KdpA, KdpB and KdpC.

The protein resides in the cell inner membrane. The enzyme catalyses K(+)(out) + ATP + H2O = K(+)(in) + ADP + phosphate + H(+). Part of the high-affinity ATP-driven potassium transport (or Kdp) system, which catalyzes the hydrolysis of ATP coupled with the electrogenic transport of potassium into the cytoplasm. This subunit is responsible for energy coupling to the transport system and for the release of the potassium ions to the cytoplasm. The protein is Potassium-transporting ATPase ATP-binding subunit of Xanthomonas axonopodis pv. citri (strain 306).